Here is a 387-residue protein sequence, read N- to C-terminus: Beta-citrylglutamate synthase B (387 aa).

The region spanning 119–304 (FQELAGHGVP…VAGIIADYAA (186 aa)) is the ATP-grasp domain. ATP contacts are provided by residues Lys-158, 193–203 (QKYIKESHGRD), and Arg-219. Mg(2+)-binding residues include Asp-264, Glu-277, and Asn-279. The Mn(2+) site is built by Asp-264, Glu-277, and Asn-279. The tract at residues 325 to 361 (ASETSEPELGPPASAAVDNMSASSSSVDSDPESTTER) is disordered. Residues 337–352 (ASAAVDNMSASSSSVD) are compositionally biased toward low complexity.

It belongs to the RimK family. It depends on Mg(2+) as a cofactor. Mn(2+) serves as cofactor. As to expression, strongly expressed in brain and testis. Expressed in eyes, thymus, lung, kidney, skeletal muscle, spleen, skin and heart. Expressed in neurons of the neocortex, the gray matter and Purkinje cells.

Its subcellular location is the cytoplasm. It carries out the reaction citrate + L-glutamate + ATP = beta-citrylglutamate + ADP + phosphate + H(+). The enzyme catalyses N-acetyl-L-aspartate + L-glutamate + ATP = N-acetyl-L-aspartyl-L-glutamate + ADP + phosphate + H(+). In terms of biological role, catalyzes the synthesis of beta-citryl-L-glutamate and N-acetyl-L-aspartyl-L-glutamate. Beta-citryl-L-glutamate is synthesized more efficiently than N-acetyl-L-aspartyl-L-glutamate. This chain is Beta-citrylglutamate synthase B (Rimklb), found in Mus musculus (Mouse).